Here is a 154-residue protein sequence, read N- to C-terminus: Protein X (154 aa).

The segment at 68-117 (PCALRFTSARRMETTVNANQVLPKVLHKRTLGLSALSTTDLEAYFKDCVF) is mitochondrial targeting sequence.

Belongs to the orthohepadnavirus protein X family. In terms of assembly, may form homodimer. May interact with host CEBPA, CFLAR, CREB1, DDB1, E4F1, HBXIP, HSPD1/HSP60, NFKBIA, POLR2E and SMAD4. Interacts with host SMC5-SMC6 complex and induces its degradation. Interacts with host TRPC4AP; leading to prevent ubiquitination of TRPC4AP. Interacts with host PLSCR1; this interaction promotes ubiquitination and degradation of HBx and impairs HBx-mediated cell proliferation. A fraction may be phosphorylated in insect cells and HepG2 cells, a human hepatoblastoma cell line. Phosphorylated in vitro by host protein kinase C or mitogen-activated protein kinase. N-acetylated in insect cells.

It is found in the host cytoplasm. The protein resides in the host nucleus. It localises to the host mitochondrion. Its function is as follows. Multifunctional protein that plays a role in silencing host antiviral defenses and promoting viral transcription. Does not seem to be essential for HBV infection. May be directly involved in development of cirrhosis and liver cancer (hepatocellular carcinoma). Most of cytosolic activities involve modulation of cytosolic calcium. The effect on apoptosis is controversial depending on the cell types in which the studies have been conducted. May induce apoptosis by localizing in mitochondria and causing loss of mitochondrial membrane potential. May also modulate apoptosis by binding host CFLAR, a key regulator of the death-inducing signaling complex (DISC). Promotes viral transcription by using the host E3 ubiquitin ligase DDB1 to target the SMC5-SMC6 complex to proteasomal degradation. This host complex would otherwise bind to viral episomal DNA, and prevents its transcription. Moderately stimulates transcription of many different viral and cellular transcription elements. Promoters and enhancers stimulated by HBx contain DNA binding sites for NF-kappa-B, AP-1, AP-2, c-EBP, ATF/CREB, or the calcium-activated factor NF-AT. The chain is Protein X from Homo sapiens (Human).